A 540-amino-acid polypeptide reads, in one-letter code: Chaperonin GroEL (540 aa).

Residues 29–32, 86–90, G413, 478–480, and D494 each bind ATP; these read TLGP, DGTTT, and DAL.

The protein belongs to the chaperonin (HSP60) family. In terms of assembly, forms a cylinder of 14 subunits composed of two heptameric rings stacked back-to-back. Interacts with the co-chaperonin GroES.

Its subcellular location is the cytoplasm. It catalyses the reaction ATP + H2O + a folded polypeptide = ADP + phosphate + an unfolded polypeptide.. Together with its co-chaperonin GroES, plays an essential role in assisting protein folding. The GroEL-GroES system forms a nano-cage that allows encapsulation of the non-native substrate proteins and provides a physical environment optimized to promote and accelerate protein folding. The protein is Chaperonin GroEL of Clostridioides difficile (Peptoclostridium difficile).